A 382-amino-acid chain; its full sequence is Carboxynorspermidine/carboxyspermidine decarboxylase (382 aa).

Position 41 is an N6-(pyridoxal phosphate)lysine (Lys41). Residues Glu236 and Asp272 each contribute to the substrate site.

This sequence belongs to the Orn/Lys/Arg decarboxylase class-II family. NspC subfamily. In terms of assembly, homodimer. Pyridoxal 5'-phosphate is required as a cofactor.

It localises to the cytoplasm. It carries out the reaction carboxynorspermidine + H(+) = norspermidine + CO2. The enzyme catalyses carboxyspermidine + H(+) = spermidine + CO2. Catalyzes the decarboxylation of carboxynorspermidine and carboxyspermidine in vitro. In vivo, responsible for synthesizing spermidine, but not sym-norspermidine. In Campylobacter jejuni subsp. jejuni serotype O:6 (strain 81116 / NCTC 11828), this protein is Carboxynorspermidine/carboxyspermidine decarboxylase.